The following is a 260-amino-acid chain: Ribonuclease 3 (260 aa).

The disordered stretch occupies residues 1–24; it reads MAQSSKYQRKPRSGERKRSQRRLE. Residues 12–24 are compositionally biased toward basic and acidic residues; that stretch reads RSGERKRSQRRLE. An RNase III domain is found at 33–162; it reads FDDLLVRTGL…FIGALYMDQG (130 aa). Glu75 serves as a coordination point for Mg(2+). The active site involves Asp79. Residues Asp148 and Glu151 each coordinate Mg(2+). Glu151 is a catalytic residue. Residues 188-257 enclose the DRBM domain; sequence DFKSQLQEFV…AKQALLALNQ (70 aa).

It belongs to the ribonuclease III family. Homodimer. Mg(2+) is required as a cofactor.

It is found in the cytoplasm. The catalysed reaction is Endonucleolytic cleavage to 5'-phosphomonoester.. In terms of biological role, digests double-stranded RNA. Involved in the processing of primary rRNA transcript to yield the immediate precursors to the large and small rRNAs (23S and 16S). Processes some mRNAs, and tRNAs when they are encoded in the rRNA operon. Processes pre-crRNA and tracrRNA of type II CRISPR loci if present in the organism. The chain is Ribonuclease 3 from Shouchella clausii (strain KSM-K16) (Alkalihalobacillus clausii).